Reading from the N-terminus, the 446-residue chain is Na(+)-translocating NADH-quinone reductase subunit A (446 aa).

It belongs to the NqrA family. In terms of assembly, composed of six subunits; NqrA, NqrB, NqrC, NqrD, NqrE and NqrF.

The catalysed reaction is a ubiquinone + n Na(+)(in) + NADH + H(+) = a ubiquinol + n Na(+)(out) + NAD(+). Functionally, NQR complex catalyzes the reduction of ubiquinone-1 to ubiquinol by two successive reactions, coupled with the transport of Na(+) ions from the cytoplasm to the periplasm. NqrA to NqrE are probably involved in the second step, the conversion of ubisemiquinone to ubiquinol. This is Na(+)-translocating NADH-quinone reductase subunit A from Pasteurella multocida (strain Pm70).